The sequence spans 159 residues: Large ribosomal subunit protein uL30 (159 aa).

Belongs to the universal ribosomal protein uL30 family. In terms of assembly, part of the 50S ribosomal subunit.

The polypeptide is Large ribosomal subunit protein uL30 (Ignicoccus hospitalis (strain KIN4/I / DSM 18386 / JCM 14125)).